The sequence spans 184 residues: Probable RNA 2'-phosphotransferase (184 aa).

Belongs to the KptA/TPT1 family.

Its function is as follows. Removes the 2'-phosphate from RNA via an intermediate in which the phosphate is ADP-ribosylated by NAD followed by a presumed transesterification to release the RNA and generate ADP-ribose 1''-2''-cyclic phosphate (APPR&gt;P). May function as an ADP-ribosylase. The chain is Probable RNA 2'-phosphotransferase from Escherichia coli O8 (strain IAI1).